A 94-amino-acid polypeptide reads, in one-letter code: Host-modulation protein 11K (94 aa).

Interacts with host GRB2; this interaction alters host cell environment by modulating host signaling pathways.

Its subcellular location is the host cytoplasm. In terms of biological role, enhances viral DNA replication and virion release. Mechansitically, optimizes viral DNA replication by interacting with host GRB2 to inhibit the negative effect of ERK signaling on B19 viral replication. Plays a role in viral infectivity. Induces apoptosis of primary erythroid progenitor cells. This chain is Host-modulation protein 11K (11K), found in Human parvovirus B19 (strain HV) (HPV B19).